Consider the following 245-residue polypeptide: 5'-nucleotidase SurE (245 aa).

A divalent metal cation is bound by residues Asp-8, Asp-9, Ser-39, and Asn-91.

Belongs to the SurE nucleotidase family. Requires a divalent metal cation as cofactor.

It localises to the cytoplasm. It catalyses the reaction a ribonucleoside 5'-phosphate + H2O = a ribonucleoside + phosphate. Functionally, nucleotidase that shows phosphatase activity on nucleoside 5'-monophosphates. The sequence is that of 5'-nucleotidase SurE from Psychromonas ingrahamii (strain DSM 17664 / CCUG 51855 / 37).